The chain runs to 113 residues: Ig heavy chain V region 36-60 (113 aa).

The sequence is that of Ig heavy chain V region 36-60 from Mus musculus (Mouse).